A 152-amino-acid polypeptide reads, in one-letter code: Nucleoside diphosphate kinase B (152 aa).

Residues 1–66 form an interaction with AKAP13 region; sequence MAHAERTFIA…DRPFFPGLVK (66 aa). 6 residues coordinate ATP: Lys12, Phe60, Arg88, Thr94, Arg105, and Asn115. His118 functions as the Pros-phosphohistidine intermediate in the catalytic mechanism.

This sequence belongs to the NDK family. In terms of assembly, hexamer of two different chains: An and B (A6, A5B, A4B2, A3B3, A2B4, AB5, B6). Interacts with CAPN8. Interacts with AKAP13. Interacts with ITGB1BP1 (via C-terminal domain region). Interacts with BCL2L10. Mg(2+) serves as cofactor.

It localises to the cytoplasm. The protein resides in the cell projection. Its subcellular location is the lamellipodium. The protein localises to the ruffle. It is found in the nucleus. It carries out the reaction a 2'-deoxyribonucleoside 5'-diphosphate + ATP = a 2'-deoxyribonucleoside 5'-triphosphate + ADP. It catalyses the reaction a ribonucleoside 5'-diphosphate + ATP = a ribonucleoside 5'-triphosphate + ADP. The catalysed reaction is ATP + protein L-histidine = ADP + protein N-phospho-L-histidine.. Major role in the synthesis of nucleoside triphosphates other than ATP. The ATP gamma phosphate is transferred to the NDP beta phosphate via a ping-pong mechanism, using a phosphorylated active-site intermediate. Negatively regulates Rho activity by interacting with AKAP13/LBC. Acts as a transcriptional activator of the MYC gene; binds DNA non-specifically. Binds to both single-stranded guanine- and cytosine-rich strands within the nuclease hypersensitive element (NHE) III(1) region of the MYC gene promoter. Does not bind to duplex NHE III(1). Has G-quadruplex (G4) DNA-binding activity, which is independent of its nucleotide-binding and kinase activity. Binds both folded and unfolded G4 with similar low nanomolar affinities. Stabilizes folded G4s regardless of whether they are prefolded or not. Exhibits histidine protein kinase activity. This Bos taurus (Bovine) protein is Nucleoside diphosphate kinase B (NME2).